We begin with the raw amino-acid sequence, 387 residues long: Alpha-maltose-1-phosphate synthase (387 aa).

Belongs to the glycosyltransferase group 1 family.

The catalysed reaction is ADP-alpha-D-glucose + alpha-D-glucose 1-phosphate = alpha-maltose 1-phosphate + ADP + H(+). It participates in glycan biosynthesis; glycogen biosynthesis. In terms of biological role, involved in the biosynthesis of the maltose-1-phosphate (M1P) building block required for alpha-glucan production by the key enzyme GlgE. Catalyzes the formation of an alpha-1,4 linkage between glucose from ADP-glucose and glucose 1-phosphate (G1P) to yield maltose-1-phosphate (M1P). This is Alpha-maltose-1-phosphate synthase from Mycolicibacterium smegmatis (strain ATCC 700084 / mc(2)155) (Mycobacterium smegmatis).